We begin with the raw amino-acid sequence, 161 residues long: Globin CTT-IX (161 aa).

The signal sequence occupies residues 1–16; the sequence is MKFFIVLALCIVGAIA. A Globin domain is found at 18-161; it reads PVSSDQANAI…NIFGMIFAHL (144 aa). Residues His-76 and His-111 each contribute to the heme b site.

This sequence belongs to the globin family. As to quaternary structure, homodimer.

This Chironomus thummi thummi (Midge) protein is Globin CTT-IX (CTT-9).